Consider the following 400-residue polypeptide: MGAPLSTARRGMGQNLSVPNPLGFFPDHQLDPLFRANSSSPDWDFNTNKDNWPMANKVGVGGFGPGFTPPHGGLLGWSPQAQGILTTSPPDPPPASTNRRSGRKPTPVSPPLRDTHPQAMQWNSTQFHQALLDPRVRGLYFPAGGSSSETQNPVPTIASLTSSIFSKTGDPAMNMENITSGLLGPLLVLQAVCFLLTKILTIPQSLDSWWTSLNFLGVPPGCPGQNSQSPISNHLPTSCPPTCPGYRWMCLRRFIIFLFILLLCLIFLLVLLDYQGMLPVCPLLPGSTTTSTGPCKTCTTLAQGTSMFPSCCCTKPSDGNCTCIPIPSSWAFGKYLWEWASARFSWLSLLVQFVQWCVGLSPTVWLLVIWMIWYWGPNLCSILSPFIPLLPIFCYLWASI.

At Met-1 the chain carries N-acetylmethionine. A lipid anchor (N-myristoyl glycine; by host) is attached at Gly-2. The pre-S1 stretch occupies residues 2-119 (GAPLSTARRG…PPLRDTHPQA (118 aa)). The interval 2–174 (GAPLSTARRG…FSKTGDPAMN (173 aa)) is pre-S. Residues 2-181 (GAPLSTARRG…AMNMENITSG (180 aa)) are Virion surface; in external conformation-facing. The Intravirion; in internal conformation segment spans residues 2 to 253 (GAPLSTARRG…PGYRWMCLRR (252 aa)). N-linked (GlcNAc...) asparagine glycosylation occurs at Pro-4. Positions 70–115 (PHGGLLGWSPQAQGILTTSPPDPPPASTNRRSGRKPTPVSPPLRDT) are disordered. A compositionally biased stretch (polar residues) spans 79–88 (PQAQGILTTS). The segment at 120 to 174 (MQWNSTQFHQALLDPRVRGLYFPAGGSSSETQNPVPTIASLTSSIFSKTGDPAMN) is pre-S2. A helical transmembrane segment spans residues 182–202 (LLGPLLVLQAVCFLLTKILTI). The Intravirion; in external conformation segment spans residues 203–253 (PQSLDSWWTSLNFLGVPPGCPGQNSQSPISNHLPTSCPPTCPGYRWMCLRR). A helical membrane pass occupies residues 254-274 (FIIFLFILLLCLIFLLVLLDY). Over 275-348 (QGMLPVCPLL…WASARFSWLS (74 aa)) the chain is Virion surface. A glycan (N-linked (GlcNAc...) asparagine; by host) is linked at Asn-320. A helical membrane pass occupies residues 349-369 (LLVQFVQWCVGLSPTVWLLVI). Residues 370–375 (WMIWYW) are Intravirion-facing. The chain crosses the membrane as a helical span at residues 376 to 398 (GPNLCSILSPFIPLLPIFCYLWA). Topologically, residues 399–400 (SI) are virion surface.

Belongs to the orthohepadnavirus major surface antigen family. In its internal form (Li-HBsAg), interacts with the capsid protein and with the isoform S. Interacts with host chaperone CANX. In terms of assembly, associates with host chaperone CANX through its pre-S2 N glycan; this association may be essential for isoform M proper secretion. As to quaternary structure, interacts with isoform L. Interacts with the antigens of satellite virus HDV (HDVAgs); this interaction is required for encapsidation of HDV genomic RNA. In terms of processing, isoform M is N-terminally acetylated by host at a ratio of 90%, and N-glycosylated by host at the pre-S2 region. Myristoylated.

The protein localises to the virion membrane. Functionally, the large envelope protein exists in two topological conformations, one which is termed 'external' or Le-HBsAg and the other 'internal' or Li-HBsAg. In its external conformation the protein attaches the virus to cell receptors and thereby initiating infection. This interaction determines the species specificity and liver tropism. This attachment induces virion internalization predominantly through caveolin-mediated endocytosis. The large envelope protein also assures fusion between virion membrane and endosomal membrane. In its internal conformation the protein plays a role in virion morphogenesis and mediates the contact with the nucleocapsid like a matrix protein. Its function is as follows. The middle envelope protein plays an important role in the budding of the virion. It is involved in the induction of budding in a nucleocapsid independent way. In this process the majority of envelope proteins bud to form subviral lipoprotein particles of 22 nm of diameter that do not contain a nucleocapsid. This Homo sapiens (Human) protein is Large envelope protein.